Here is a 46-residue protein sequence, read N- to C-terminus: Photosystem II reaction center protein K (46 aa).

Residues 1 to 9 constitute a propeptide that is removed on maturation; that stretch reads MSTLPILLA. A helical transmembrane segment spans residues 25 to 45; the sequence is LPSIPVLFLLLAFVWQAAVSF.

Belongs to the PsbK family. As to quaternary structure, PSII is composed of 1 copy each of membrane proteins PsbA, PsbB, PsbC, PsbD, PsbE, PsbF, PsbH, PsbI, PsbJ, PsbK, PsbL, PsbM, PsbT, PsbX, PsbY, PsbZ, Psb30/Ycf12, at least 3 peripheral proteins of the oxygen-evolving complex and a large number of cofactors. It forms dimeric complexes.

Its subcellular location is the plastid. It is found in the chloroplast thylakoid membrane. Its function is as follows. One of the components of the core complex of photosystem II (PSII). PSII is a light-driven water:plastoquinone oxidoreductase that uses light energy to abstract electrons from H(2)O, generating O(2) and a proton gradient subsequently used for ATP formation. It consists of a core antenna complex that captures photons, and an electron transfer chain that converts photonic excitation into a charge separation. In Nephroselmis olivacea (Green alga), this protein is Photosystem II reaction center protein K.